A 201-amino-acid polypeptide reads, in one-letter code: Prostamide/prostaglandin F synthase (201 aa).

Tyrosine 108 carries the post-translational modification Phosphotyrosine.

This sequence belongs to the peroxiredoxin-like PRXL2 family. Prostamide/prostaglandin F synthase subfamily.

It is found in the cytoplasm. The protein localises to the cytosol. The enzyme catalyses prostaglandin H2 + [thioredoxin]-dithiol = prostaglandin F2alpha + [thioredoxin]-disulfide. It catalyses the reaction prostamide F2alpha + [thioredoxin]-disulfide = prostamide H2 + [thioredoxin]-dithiol. In terms of biological role, catalyzes the reduction of prostaglandin-ethanolamide H(2) (prostamide H(2)) to prostamide F(2alpha) with NADPH as proton donor. Also able to reduce prostaglandin H(2) to prostaglandin F(2alpha). The polypeptide is Prostamide/prostaglandin F synthase (PRXL2B) (Bos taurus (Bovine)).